A 329-amino-acid chain; its full sequence is Signal recognition particle receptor FtsY (329 aa).

GTP-binding positions include 127–134 (GVNGVGKT), 209–213 (DTAGR), and 273–276 (TKLD).

It belongs to the GTP-binding SRP family. FtsY subfamily. In terms of assembly, part of the signal recognition particle protein translocation system, which is composed of SRP and FtsY.

It is found in the cell membrane. The protein resides in the cytoplasm. The catalysed reaction is GTP + H2O = GDP + phosphate + H(+). Its function is as follows. Involved in targeting and insertion of nascent membrane proteins into the cytoplasmic membrane. Acts as a receptor for the complex formed by the signal recognition particle (SRP) and the ribosome-nascent chain (RNC). The chain is Signal recognition particle receptor FtsY from Bacillus subtilis (strain 168).